Here is a 373-residue protein sequence, read N- to C-terminus: DNA replication and repair protein RecF (373 aa).

30–37 contacts ATP; that stretch reads GENAQGKT.

This sequence belongs to the RecF family.

The protein resides in the cytoplasm. In terms of biological role, the RecF protein is involved in DNA metabolism; it is required for DNA replication and normal SOS inducibility. RecF binds preferentially to single-stranded, linear DNA. It also seems to bind ATP. In Bacillus cytotoxicus (strain DSM 22905 / CIP 110041 / 391-98 / NVH 391-98), this protein is DNA replication and repair protein RecF.